A 191-amino-acid polypeptide reads, in one-letter code: Fe/S biogenesis protein NfuA (191 aa).

[4Fe-4S] cluster-binding residues include Cys-149 and Cys-152.

This sequence belongs to the NfuA family. As to quaternary structure, homodimer. [4Fe-4S] cluster serves as cofactor.

In terms of biological role, involved in iron-sulfur cluster biogenesis. Binds a 4Fe-4S cluster, can transfer this cluster to apoproteins, and thereby intervenes in the maturation of Fe/S proteins. Could also act as a scaffold/chaperone for damaged Fe/S proteins. The polypeptide is Fe/S biogenesis protein NfuA (Yersinia enterocolitica serotype O:8 / biotype 1B (strain NCTC 13174 / 8081)).